A 988-amino-acid chain; its full sequence is Chloride channel protein 1 (988 aa).

Over 1-118 (MEQSRSQQRG…VVRRKLGEDG (118 aa)) the chain is Cytoplasmic. Residues 65-75 (HKEQFSDREQD) show a composition bias toward basic and acidic residues. Residues 65-92 (HKEQFSDREQDIGMPKKTGSSSTVDSKD) are disordered. A helical membrane pass occupies residues 119 to 150 (IFLVLLGLLMALVSWSMDYVSAKSLQAYKWSY). At 151–158 (AQMQPSLP) the chain is on the extracellular side. A helical transmembrane segment spans residues 159–179 (LQFLVWVTFPLVLILFSALFC). The Cytoplasmic portion of the chain corresponds to 180 to 183 (HLIS). The note=Loop between two helices intramembrane region spans 184–189 (PQAVGS). The short motif at 188-192 (GSGIP) is the Selectivity filter part_1 element. A chloride-binding site is contributed by serine 189. Residues 190–195 (GIPEMK) constitute an intramembrane region (helical). Residues 196–208 (TILRGVVLKEYLT) are Cytoplasmic-facing. The segment at residues 209–224 (MKAFVAKVVALTAGLG) is an intramembrane region (helical). Positions 225–230 (SGIPVG) form an intramembrane region, note=Loop between two helices. Positions 230–234 (GKEGP) match the Selectivity filter part_2 motif. The segment at residues 231-246 (KEGPFVHIASICAAVL) is an intramembrane region (helical). At 247–268 (SKFMSVFCGVYEQPYYYSDILT) the chain is on the cytoplasmic side. 2 consecutive intramembrane regions (helical) follow at residues 269 to 280 (VGCAVGVGCCFG) and 281 to 290 (TPLGGVLFSI). Residues 291–301 (EVTSTYFAVRN) are Cytoplasmic-facing. Residues 302 to 321 (YWRGFFAATFSAFVFRVLAV) form a helical membrane-spanning segment. Residues 322–347 (WNKDAVTITALFRTNFRMDFPFDLKE) are Extracellular-facing. A helical transmembrane segment spans residues 348-376 (LPAFAAIGICCGLLGAVFVYLHRQVMLGV). Residues 377–390 (RKHKALSQFLAKHR) lie on the Cytoplasmic side of the membrane. Residues 391 to 408 (LLYPGIVTFVIASFTFPP) form a helical membrane-spanning segment. Over 409–414 (GMGQFM) the chain is Extracellular. An intramembrane region (note=Loop between two helices) is located at residues 415-418 (AGEL). An intramembrane region (helical) is located at residues 419–426 (MPREAIST). Topologically, residues 427-457 (LFDNNTWVKHAGDPESLGQSAVWIHPRVNVV) are extracellular. Residues 458–475 (IIIFLFFVMKFWMSIVAT) constitute an intramembrane region (helical). An intramembrane region (note=Loop between two helices) is located at residues 476–482 (TMPIPCG). The short motif at 482–486 (GGFMP) is the Selectivity filter part_3 element. An intramembrane region (helical) is located at residues 483–498 (GFMPVFVLGAAFGRLV). Residue phenylalanine 484 participates in chloride binding. At 499–521 (GEIMAMLFPDGILFDDIIYKILP) the chain is on the extracellular side. The segment at residues 522–538 (GGYAVIGAAALTGAVSH) is an intramembrane region (helical). An intramembrane region (note=Loop between two helices) is located at residues 539–540 (TV). An intramembrane region (helical) is located at residues 541 to 554 (STAVICFELTGQIA). Over 555-557 (HIL) the chain is Extracellular. The helical intramembrane region spans 558–571 (PMMVAVILANMVAQ). An intramembrane region (note=Loop between two helices) is located at residues 572-575 (SLQP). The helical intramembrane region spans 576-578 (SLY). Tyrosine 578 contributes to the chloride binding site. Topologically, residues 579-988 (DSIIQVKKLP…DEEDEDELIL (410 aa)) are cytoplasmic. The CBS 1 domain occupies 609–668 (MVRDVKFVSASYTYGELRTLLQTTTVKTLPLVDSKDSMILLGSVERSELQALLQRHLCPE). Residues 713–764 (EDEDEDLSGKSELPPSLALHPSTTAPLSPEEPNGPLPGHKQQPEAPEPAGQR) form a disordered region. Residues 821 to 876 (IDQSPFQLVEQTTLHKTHTLFSLLGLHLAYVTSMGKLRGVLALEELQKAIEGHTKS) form the CBS 2 domain. A disordered region spans residues 880-988 (LRPPLASFRN…DEEDEDELIL (109 aa)). Serine 886 is modified (phosphoserine). Polar residues predominate over residues 887–906 (FRNTTSTRKSTGAPPSSAEN). The span at 929–941 (TPVPSPSPEPPLS) shows a compositional bias: pro residues. Acidic residues-rich tracts occupy residues 950-967 (ELEE…EELA) and 979-988 (DEEDEDELIL).

The protein belongs to the chloride channel (TC 2.A.49) family. ClC-1/CLCN1 subfamily. Homodimer. Predominantly expressed in skeletal muscles.

The protein localises to the cell membrane. It is found in the sarcolemma. Its subcellular location is the T-tubule. It carries out the reaction chloride(in) = chloride(out). It catalyses the reaction thiocyanate(in) = thiocyanate(out). The enzyme catalyses bromide(in) = bromide(out). The catalysed reaction is nitrate(in) = nitrate(out). It carries out the reaction iodide(out) = iodide(in). With respect to regulation, modulated by membrane voltage with depolarization favouring channel opening and hyperpolarization favouring channel closure. Inhibited by acidic pH and ATP binding due to a shift of voltage dependence of common gating to more positive voltages. Inhibited by 9-anthracene-carboxylic. Voltage-gated chloride channel involved in skeletal muscle excitability. Generates most of the plasma membrane chloride conductance in skeletal muscle fibers, stabilizes the resting membrane potential and contributes to the repolarization phase during action potential firing. Forms a homodimeric channel where each subunit has its own ion conduction pathway. Conducts double-barreled currents controlled by two types of gates, two fast glutamate gates that control each subunit independently and a slow common gate that opens and shuts off both subunits simultaneously. Has a significant open probability at muscle resting potential and is further activated upon membrane depolarization. Permeable to small monovalent anions with ion selectivity for chloride &gt; thiocyanate &gt; bromide &gt; nitrate &gt; iodide. This Homo sapiens (Human) protein is Chloride channel protein 1.